Consider the following 211-residue polypeptide: Thiamine-phosphate synthase (211 aa).

4-amino-2-methyl-5-(diphosphooxymethyl)pyrimidine is bound by residues 37–41 (QLRIK) and Asn69. Mg(2+) is bound by residues Asp70 and Asp89. Ser108 provides a ligand contact to 4-amino-2-methyl-5-(diphosphooxymethyl)pyrimidine. 134 to 136 (TQT) serves as a coordination point for 2-[(2R,5Z)-2-carboxy-4-methylthiazol-5(2H)-ylidene]ethyl phosphate. Lys137 contacts 4-amino-2-methyl-5-(diphosphooxymethyl)pyrimidine. Residues Gly166 and 186–187 (VS) each bind 2-[(2R,5Z)-2-carboxy-4-methylthiazol-5(2H)-ylidene]ethyl phosphate.

It belongs to the thiamine-phosphate synthase family. Mg(2+) serves as cofactor.

It catalyses the reaction 2-[(2R,5Z)-2-carboxy-4-methylthiazol-5(2H)-ylidene]ethyl phosphate + 4-amino-2-methyl-5-(diphosphooxymethyl)pyrimidine + 2 H(+) = thiamine phosphate + CO2 + diphosphate. The enzyme catalyses 2-(2-carboxy-4-methylthiazol-5-yl)ethyl phosphate + 4-amino-2-methyl-5-(diphosphooxymethyl)pyrimidine + 2 H(+) = thiamine phosphate + CO2 + diphosphate. The catalysed reaction is 4-methyl-5-(2-phosphooxyethyl)-thiazole + 4-amino-2-methyl-5-(diphosphooxymethyl)pyrimidine + H(+) = thiamine phosphate + diphosphate. It functions in the pathway cofactor biosynthesis; thiamine diphosphate biosynthesis; thiamine phosphate from 4-amino-2-methyl-5-diphosphomethylpyrimidine and 4-methyl-5-(2-phosphoethyl)-thiazole: step 1/1. Its function is as follows. Condenses 4-methyl-5-(beta-hydroxyethyl)thiazole monophosphate (THZ-P) and 2-methyl-4-amino-5-hydroxymethyl pyrimidine pyrophosphate (HMP-PP) to form thiamine monophosphate (TMP). This chain is Thiamine-phosphate synthase, found in Klebsiella pneumoniae subsp. pneumoniae (strain ATCC 700721 / MGH 78578).